Here is a 284-residue protein sequence, read N- to C-terminus: NADH-cytochrome b5 reductase 1 (284 aa).

A helical membrane pass occupies residues 8 to 28 (PLVIFSTLAAIILAAVAVYVV). The 104-residue stretch at 41-144 (DVFQKFPLIE…RGPKGFFTYT (104 aa)) folds into the FAD-binding FR-type domain. FAD-binding positions include 124-139 (DSKS…GPKG) and 150-182 (HLGM…KISL).

Belongs to the flavoprotein pyridine nucleotide cytochrome reductase family. In terms of assembly, monomer. Component of the 2-(3-amino-3-carboxypropyl)histidine synthase complex composed of DPH1, DPH2, DPH3 and a NADH-dependent reductase, predominantly CBR1. FAD is required as a cofactor.

It is found in the mitochondrion outer membrane. It carries out the reaction 2 Fe(III)-[cytochrome b5] + NADH = 2 Fe(II)-[cytochrome b5] + NAD(+) + H(+). The catalysed reaction is 2 Fe(3+)-[Dph3] + NADH = 2 Fe(2+)-[Dph3] + NAD(+) + H(+). The protein operates within protein modification; peptidyl-diphthamide biosynthesis. Functionally, NADH-dependent reductase for DPH3 and cytochrome b5. Required for the first step of diphthamide biosynthesis, a post-translational modification of histidine which occurs in elongation factor 2. DPH1 and DPH2 transfer a 3-amino-3-carboxypropyl (ACP) group from S-adenosyl-L-methionine (SAM) to a histidine residue, the reaction is assisted by a reduction system comprising DPH3 and a NADH-dependent reductase, predominantly CBR1. By reducing DPH3, also involved in the formation of the tRNA wobble base modification mcm5s 2U (5-methoxycarbonylmethyl-2-thiouridine), mediated by the elongator complex. The cytochrome b5/NADH cytochrome b5 reductase electron transfer system supports the catalytic activity of several sterol biosynthetic enzymes. This is NADH-cytochrome b5 reductase 1 (CBR1) from Meyerozyma guilliermondii (strain ATCC 6260 / CBS 566 / DSM 6381 / JCM 1539 / NBRC 10279 / NRRL Y-324) (Yeast).